Reading from the N-terminus, the 178-residue chain is Probable major fimbrial subunit LpfA (178 aa).

Residues 1–24 (MEFFMKKVVFALTALALTSGTVFA) form the signal peptide.

Belongs to the fimbrial protein family.

The protein resides in the fimbrium. Its function is as follows. Part of the lpfABCC'DE fimbrial operon. LP fimbriae may participate in the interaction with eukaryotic cells by assisting in microcolony formation. This is Probable major fimbrial subunit LpfA (lpfA) from Escherichia coli O157:H7.